The primary structure comprises 300 residues: Haloalkane dehalogenase (300 aa).

One can recognise an AB hydrolase-1 domain in the interval 32 to 155 (AIVFQHGNPT…PAVRGVFQGF (124 aa)). D109 acts as the Nucleophile in catalysis. The active-site Proton donor is E133. Residue H273 is the Proton acceptor of the active site.

The protein belongs to the haloalkane dehalogenase family. Type 2 subfamily. Monomer.

It catalyses the reaction 1-haloalkane + H2O = a halide anion + a primary alcohol + H(+). Functionally, catalyzes hydrolytic cleavage of carbon-halogen bonds in halogenated aliphatic compounds, leading to the formation of the corresponding primary alcohols, halide ions and protons. This Mycobacterium bovis (strain ATCC BAA-935 / AF2122/97) protein is Haloalkane dehalogenase.